The chain runs to 206 residues: Large ribosomal subunit protein uL4 (206 aa).

It belongs to the universal ribosomal protein uL4 family. As to quaternary structure, part of the 50S ribosomal subunit.

In terms of biological role, one of the primary rRNA binding proteins, this protein initially binds near the 5'-end of the 23S rRNA. It is important during the early stages of 50S assembly. It makes multiple contacts with different domains of the 23S rRNA in the assembled 50S subunit and ribosome. Its function is as follows. Forms part of the polypeptide exit tunnel. The polypeptide is Large ribosomal subunit protein uL4 (Methylorubrum extorquens (strain CM4 / NCIMB 13688) (Methylobacterium extorquens)).